A 265-amino-acid chain; its full sequence is Glutamate racemase (265 aa).

Residues 12–13 (DS) and 44–45 (YG) contribute to the substrate site. Cysteine 75 acts as the Proton donor/acceptor in catalysis. 76-77 (NT) lines the substrate pocket. Cysteine 186 acts as the Proton donor/acceptor in catalysis. 187-188 (TH) is a substrate binding site.

Belongs to the aspartate/glutamate racemases family.

The catalysed reaction is L-glutamate = D-glutamate. It functions in the pathway cell wall biogenesis; peptidoglycan biosynthesis. Functionally, provides the (R)-glutamate required for cell wall biosynthesis. The polypeptide is Glutamate racemase (Pseudomonas aeruginosa (strain ATCC 15692 / DSM 22644 / CIP 104116 / JCM 14847 / LMG 12228 / 1C / PRS 101 / PAO1)).